Reading from the N-terminus, the 245-residue chain is Biosynthetic peptidoglycan transglycosylase (245 aa).

Residues 29–49 traverse the membrane as a helical segment; sequence LLVAFLILSLVLVATVSVINP.

Belongs to the glycosyltransferase 51 family.

Its subcellular location is the cell inner membrane. It catalyses the reaction [GlcNAc-(1-&gt;4)-Mur2Ac(oyl-L-Ala-gamma-D-Glu-L-Lys-D-Ala-D-Ala)](n)-di-trans,octa-cis-undecaprenyl diphosphate + beta-D-GlcNAc-(1-&gt;4)-Mur2Ac(oyl-L-Ala-gamma-D-Glu-L-Lys-D-Ala-D-Ala)-di-trans,octa-cis-undecaprenyl diphosphate = [GlcNAc-(1-&gt;4)-Mur2Ac(oyl-L-Ala-gamma-D-Glu-L-Lys-D-Ala-D-Ala)](n+1)-di-trans,octa-cis-undecaprenyl diphosphate + di-trans,octa-cis-undecaprenyl diphosphate + H(+). The protein operates within cell wall biogenesis; peptidoglycan biosynthesis. In terms of biological role, peptidoglycan polymerase that catalyzes glycan chain elongation from lipid-linked precursors. The chain is Biosynthetic peptidoglycan transglycosylase from Shewanella amazonensis (strain ATCC BAA-1098 / SB2B).